The sequence spans 291 residues: Small ribosomal subunit biogenesis GTPase RsgA 2 (291 aa).

Residues 63–221 enclose the CP-type G domain; the sequence is ENALVRPPVA…VADTPGFSSI (159 aa). Residues 112-115 and 164-172 contribute to the GTP site; these read SKMD and GQSGVGKST. Residues C245, C250, H252, and C258 each coordinate Zn(2+).

Belongs to the TRAFAC class YlqF/YawG GTPase family. RsgA subfamily. In terms of assembly, monomer. Associates with 30S ribosomal subunit, binds 16S rRNA. The cofactor is Zn(2+).

It is found in the cytoplasm. Functionally, one of several proteins that assist in the late maturation steps of the functional core of the 30S ribosomal subunit. Helps release RbfA from mature subunits. May play a role in the assembly of ribosomal proteins into the subunit. Circularly permuted GTPase that catalyzes slow GTP hydrolysis, GTPase activity is stimulated by the 30S ribosomal subunit. The polypeptide is Small ribosomal subunit biogenesis GTPase RsgA 2 (Listeria innocua serovar 6a (strain ATCC BAA-680 / CLIP 11262)).